The primary structure comprises 71 residues: Ranatuerin-2PLa (71 aa).

Residues 1-22 form the signal peptide; it reads MFTTKKSMLLFFFLGTISLSLC. The propeptide occupies 23–41; it reads EQERGADEDDGVEMTEEEV. Residues cysteine 66 and cysteine 71 are joined by a disulfide bond.

In terms of tissue distribution, expressed by the skin glands.

Its subcellular location is the secreted. In terms of biological role, may have antimicrobial activity against the Gram-negative bacterium E.coli. This is Ranatuerin-2PLa from Lithobates palustris (Pickerel frog).